We begin with the raw amino-acid sequence, 102 residues long: Small ribosomal subunit protein uS10 (102 aa).

The protein belongs to the universal ribosomal protein uS10 family. In terms of assembly, part of the 30S ribosomal subunit.

Its function is as follows. Involved in the binding of tRNA to the ribosomes. This chain is Small ribosomal subunit protein uS10, found in Oceanobacillus iheyensis (strain DSM 14371 / CIP 107618 / JCM 11309 / KCTC 3954 / HTE831).